The following is a 290-amino-acid chain: Putative phosphatase MPN_427 (290 aa).

Catalysis depends on Asp16, which acts as the Nucleophile. Asp16 contributes to the Mg(2+) binding site. Position 17 (Leu17) interacts with phosphate. Position 18 (Asp18) interacts with Mg(2+). Phosphate is bound by residues 53-54 (TG) and Lys216. Residues Asp239 and Ser240 each contribute to the Mg(2+) site. Asn242 is a phosphate binding site.

The protein belongs to the HAD-like hydrolase superfamily. Cof family. It depends on Mg(2+) as a cofactor.

In Mycoplasma pneumoniae (strain ATCC 29342 / M129 / Subtype 1) (Mycoplasmoides pneumoniae), this protein is Putative phosphatase MPN_427.